Consider the following 149-residue polypeptide: Arginine regulator (149 aa).

It belongs to the ArgR family.

Its subcellular location is the cytoplasm. The protein operates within amino-acid degradation; L-arginine degradation via ADI pathway. Regulates the transcription of the arc operon, involved in arginine catabolism. This Bacillus cereus (strain ATCC 14579 / DSM 31 / CCUG 7414 / JCM 2152 / NBRC 15305 / NCIMB 9373 / NCTC 2599 / NRRL B-3711) protein is Arginine regulator (argR1).